The primary structure comprises 76 residues: EMBRYO SURROUNDING FACTOR 1-like protein 8 (76 aa).

Residues 1 to 22 (MSSSQFFILCIILISSFPLHEC) form the signal peptide. 4 cysteine pairs are disulfide-bonded: C38–C54, C43–C74, C52–C70, and C55–C63.

This sequence belongs to the MEG family. In terms of tissue distribution, expressed in flowers.

The sequence is that of EMBRYO SURROUNDING FACTOR 1-like protein 8 (ESFL8) from Arabidopsis thaliana (Mouse-ear cress).